The sequence spans 210 residues: Cytochrome c biogenesis ATP-binding export protein CcmA (210 aa).

Positions M1–F208 constitute an ABC transporter domain. Residue G38 to T45 participates in ATP binding.

It belongs to the ABC transporter superfamily. CcmA exporter (TC 3.A.1.107) family. As to quaternary structure, the complex is composed of two ATP-binding proteins (CcmA) and two transmembrane proteins (CcmB).

The protein localises to the cell inner membrane. It catalyses the reaction heme b(in) + ATP + H2O = heme b(out) + ADP + phosphate + H(+). Part of the ABC transporter complex CcmAB involved in the biogenesis of c-type cytochromes; once thought to export heme, this seems not to be the case, but its exact role is uncertain. Responsible for energy coupling to the transport system. This Haemophilus ducreyi (strain 35000HP / ATCC 700724) protein is Cytochrome c biogenesis ATP-binding export protein CcmA.